A 421-amino-acid polypeptide reads, in one-letter code: Serine hydroxymethyltransferase (421 aa).

(6S)-5,6,7,8-tetrahydrofolate is bound by residues L118 and 122–124 (GHL). K226 is modified (N6-(pyridoxal phosphate)lysine).

Belongs to the SHMT family. As to quaternary structure, homodimer. The cofactor is pyridoxal 5'-phosphate.

Its subcellular location is the cytoplasm. It catalyses the reaction (6R)-5,10-methylene-5,6,7,8-tetrahydrofolate + glycine + H2O = (6S)-5,6,7,8-tetrahydrofolate + L-serine. Its pathway is one-carbon metabolism; tetrahydrofolate interconversion. It participates in amino-acid biosynthesis; glycine biosynthesis; glycine from L-serine: step 1/1. Catalyzes the reversible interconversion of serine and glycine with tetrahydrofolate (THF) serving as the one-carbon carrier. This reaction serves as the major source of one-carbon groups required for the biosynthesis of purines, thymidylate, methionine, and other important biomolecules. Also exhibits THF-independent aldolase activity toward beta-hydroxyamino acids, producing glycine and aldehydes, via a retro-aldol mechanism. The polypeptide is Serine hydroxymethyltransferase (Mycoplasmopsis agalactiae (strain NCTC 10123 / CIP 59.7 / PG2) (Mycoplasma agalactiae)).